We begin with the raw amino-acid sequence, 202 residues long: Glycerol-3-phosphate acyltransferase (202 aa).

A run of 4 helical transmembrane segments spans residues 1 to 21 (MTLI…FGVL), 84 to 104 (AVAA…FLHF), 116 to 136 (ILLG…LAVA), and 143 to 163 (SLAA…FLGF).

It belongs to the PlsY family. Probably interacts with PlsX.

The protein localises to the cell inner membrane. The catalysed reaction is an acyl phosphate + sn-glycerol 3-phosphate = a 1-acyl-sn-glycero-3-phosphate + phosphate. It functions in the pathway lipid metabolism; phospholipid metabolism. Functionally, catalyzes the transfer of an acyl group from acyl-phosphate (acyl-PO(4)) to glycerol-3-phosphate (G3P) to form lysophosphatidic acid (LPA). This enzyme utilizes acyl-phosphate as fatty acyl donor, but not acyl-CoA or acyl-ACP. This is Glycerol-3-phosphate acyltransferase from Nitrosospira multiformis (strain ATCC 25196 / NCIMB 11849 / C 71).